The sequence spans 247 residues: Phycobilisome rod-core linker polypeptide CpcG2 (247 aa).

In terms of domain architecture, PBS-linker spans 11–189; the sequence is SSQNQRVPGY…YWRDKLENER (179 aa).

The protein belongs to the phycobilisome linker protein family. In terms of assembly, the phycobilisome is a hemidiscoidal structure that is composed of two distinct substructures: a core complex and a number of rods radiating from the core.

It localises to the cellular thylakoid membrane. Its function is as follows. Rod-core linker protein required for attachment of phycocyanin to allophycocyanin in cores of phycobilisomes. Linker polypeptides determine the state of aggregation and the location of the disk-shaped phycobiliprotein units within the phycobilisome and modulate their spectroscopic properties in order to mediate a directed and optimal energy transfer. This chain is Phycobilisome rod-core linker polypeptide CpcG2 (cpcG2), found in Mastigocladus laminosus (Fischerella sp.).